A 375-amino-acid chain; its full sequence is Leucoanthocyanidin dioxygenase 1 (375 aa).

The Fe2OG dioxygenase domain maps to 218–317 (LLLQLKINYY…RLSWVVFCEP (100 aa)). His-242, Asp-244, and His-298 together coordinate Fe cation. Arg-308 lines the 2-oxoglutarate pocket.

Belongs to the iron/ascorbate-dependent oxidoreductase family. The cofactor is L-ascorbate. It depends on Fe(2+) as a cofactor.

The enzyme catalyses a (2R,3S,4S)-leucoanthocyanidin + 2-oxoglutarate + O2 = a 4-H-anthocyanidin with a 3-hydroxy group + succinate + CO2 + 2 H2O. The protein operates within pigment biosynthesis; anthocyanin biosynthesis. In terms of biological role, involved in anthocyanin and protoanthocyanidin biosynthesis by catalyzing the oxidation of leucoanthocyanidins into anthocyanidins. Is able to synthesize anthocyanin pigments from leucoanthocyanidins in aleurone tissue. Converts dihydroquercetin to quercetin in vitro. The chain is Leucoanthocyanidin dioxygenase 1 from Oryza sativa subsp. indica (Rice).